A 150-amino-acid polypeptide reads, in one-letter code: Small ribosomal subunit protein eS19S (150 aa).

Belongs to the eukaryotic ribosomal protein eS19 family.

The chain is Small ribosomal subunit protein eS19S (RPS19S) from Ascaris suum (Pig roundworm).